The following is a 262-amino-acid chain: Mediator of RNA polymerase II transcription subunit 8 (262 aa).

A coiled-coil region spans residues 168–211 (LEEKEMGVKNVITGLKRQLDEGDEEDEEEEEEEEDMQGEEMEVV). The disordered stretch occupies residues 183-206 (KRQLDEGDEEDEEEEEEEEDMQGE). Acidic residues predominate over residues 188–206 (EGDEEDEEEEEEEEDMQGE).

It belongs to the Mediator complex subunit 8 family. As to quaternary structure, component of the Mediator complex.

The protein localises to the nucleus. Component of the Mediator complex, a coactivator involved in the regulated transcription of nearly all RNA polymerase II-dependent genes. Mediator functions as a bridge to convey information from gene-specific regulatory proteins to the basal RNA polymerase II transcription machinery. Mediator is recruited to promoters by direct interactions with regulatory proteins and serves as a scaffold for the assembly of a functional preinitiation complex with RNA polymerase II and the general transcription factors. The protein is Mediator of RNA polymerase II transcription subunit 8 (MED8) of Coccidioides immitis (strain RS) (Valley fever fungus).